The primary structure comprises 767 residues: Integrin beta-8 (767 aa).

Residues M1–R21 form the signal peptide. At G22–L681 the chain is on the extracellular side. Residues R46–P95 enclose the PSI domain. 25 disulfide bridges follow: C47/C65, C55/C469, C58/C83, C68/C94, C211/C218, C266/C307, C407/C419, C439/C467, C471/C490, C471/C493, C481/C493, C498/C527, C510/C525, C519/C530, C532/C545, C552/C566, C560/C571, C573/C582, C584/C608, C592/C606, C600/C611, C613/C623, C626/C629, C633/C660, and C639/C656. In terms of domain architecture, VWFA spans P146 to I384. Mg(2+) contacts are provided by D154 and S156. D193 is a Ca(2+) binding site. N233 carries an N-linked (GlcNAc...) asparagine glycan. Residues N249, D251, P253, and E254 each coordinate Ca(2+). E254 lines the Mg(2+) pocket. Residue N402 is glycosylated (N-linked (GlcNAc...) asparagine). 3 N-linked (GlcNAc...) asparagine glycosylation sites follow: N421, N431, and N456. 4 consecutive I-EGF domains span residues C471–D494, C498–E546, K547–Q583, and C584–E624. An N-linked (GlcNAc...) asparagine glycan is attached at N647. A helical membrane pass occupies residues R682 to I702. Topologically, residues R703–F767 are cytoplasmic.

This sequence belongs to the integrin beta chain family. In terms of assembly, heterodimer of an alpha and a beta subunit. Beta-8 (ITGB8) associates with alpha-V (ITGAV) to form ITGAV:ITGB8. ITGAV:ITGB8 interacts with TGFB1.

It is found in the cell membrane. Integrin alpha-V:beta-8 (ITGAV:ITGB8) is a receptor for fibronectin. It recognizes the sequence R-G-D in its ligands. Integrin alpha-V:beta-6 (ITGAV:ITGB6) mediates R-G-D-dependent release of transforming growth factor beta-1 (TGF-beta-1) from regulatory Latency-associated peptide (LAP), thereby playing a key role in TGF-beta-1 activation on the surface of activated regulatory T-cells (Tregs). Required during vasculogenesis. The chain is Integrin beta-8 from Mus musculus (Mouse).